The chain runs to 583 residues: Bifunctional dihydrofolate reductase-thymidylate synthase (583 aa).

Residues 9–229 (DIYAICACCK…TTLDFVIYSK (221 aa)) form the DHFR domain. 36 to 42 (GLGNEGG) contacts NADP(+). A substrate-binding site is contributed by Asp-51. Residues 104–106 (KAS) and 125–128 (LSRT) contribute to the NADP(+) site. Ile-165, Tyr-171, and Thr-186 together coordinate substrate. Residue 166-173 (GGASVYKE) coordinates NADP(+). The thymidylate synthase stretch occupies residues 298–583 (HPEYQYLNII…HDKISMDMAA (286 aa)). Arg-320 lines the dUMP pocket. Cys-465 is a catalytic residue. Residues His-466, 484 to 488 (QRSCD), Asn-496, and 526 to 528 (HVY) each bind dUMP.

The protein in the N-terminal section; belongs to the dihydrofolate reductase family. In the C-terminal section; belongs to the thymidylate synthase family. In terms of assembly, homodimer.

The enzyme catalyses (6S)-5,6,7,8-tetrahydrofolate + NADP(+) = 7,8-dihydrofolate + NADPH + H(+). It catalyses the reaction dUMP + (6R)-5,10-methylene-5,6,7,8-tetrahydrofolate = 7,8-dihydrofolate + dTMP. The protein operates within cofactor biosynthesis; tetrahydrofolate biosynthesis; 5,6,7,8-tetrahydrofolate from 7,8-dihydrofolate: step 1/1. In terms of biological role, bifunctional enzyme. Involved in de novo dTMP biosynthesis. Key enzyme in folate metabolism. Catalyzes an essential reaction for de novo glycine and purine synthesis, DNA precursor synthesis, and for the conversion of dUMP to dTMP. The polypeptide is Bifunctional dihydrofolate reductase-thymidylate synthase (Plasmodium chabaudi).